The chain runs to 210 residues: Pyridoxine/pyridoxamine 5'-phosphate oxidase (210 aa).

Residues 7-10 and lysine 65 each bind substrate; that span reads RQSY. FMN is bound by residues 60 to 65, 75 to 76, arginine 81, lysine 82, and glutamine 104; these read RIVLIK and YT. Residues tyrosine 122, arginine 126, and serine 130 each coordinate substrate. Residues 139-140 and tryptophan 182 each bind FMN; that span reads QS. Substrate is bound at residue 188-190; that stretch reads RLH. Position 192 (arginine 192) interacts with FMN.

Belongs to the pyridoxamine 5'-phosphate oxidase family. In terms of assembly, homodimer. The cofactor is FMN.

It carries out the reaction pyridoxamine 5'-phosphate + O2 + H2O = pyridoxal 5'-phosphate + H2O2 + NH4(+). The enzyme catalyses pyridoxine 5'-phosphate + O2 = pyridoxal 5'-phosphate + H2O2. Its pathway is cofactor metabolism; pyridoxal 5'-phosphate salvage; pyridoxal 5'-phosphate from pyridoxamine 5'-phosphate: step 1/1. It participates in cofactor metabolism; pyridoxal 5'-phosphate salvage; pyridoxal 5'-phosphate from pyridoxine 5'-phosphate: step 1/1. Its function is as follows. Catalyzes the oxidation of either pyridoxine 5'-phosphate (PNP) or pyridoxamine 5'-phosphate (PMP) into pyridoxal 5'-phosphate (PLP). The sequence is that of Pyridoxine/pyridoxamine 5'-phosphate oxidase from Bordetella petrii (strain ATCC BAA-461 / DSM 12804 / CCUG 43448).